Consider the following 884-residue polypeptide: Protein translocase subunit SecA (884 aa).

Residues glutamine 82, 100–104, and aspartate 491 each bind ATP; that span reads GEGKT.

It belongs to the SecA family.

The protein localises to the plastid. The protein resides in the chloroplast stroma. It is found in the chloroplast thylakoid membrane. The catalysed reaction is ATP + H2O + cellular proteinSide 1 = ADP + phosphate + cellular proteinSide 2.. Functionally, has a central role in coupling the hydrolysis of ATP to the transfer of proteins across the thylakoid membrane. In Olisthodiscus luteus (Marine phytoflagellate), this protein is Protein translocase subunit SecA.